The primary structure comprises 137 residues: Large ribosomal subunit protein uL16 (137 aa).

It belongs to the universal ribosomal protein uL16 family. In terms of assembly, part of the 50S ribosomal subunit.

In terms of biological role, binds 23S rRNA and is also seen to make contacts with the A and possibly P site tRNAs. This chain is Large ribosomal subunit protein uL16, found in Lactococcus lactis subsp. cremoris (strain SK11).